The following is an 80-amino-acid chain: RNA-binding protein KhpA (80 aa).

The KH domain maps to 33–80 (GRTVEVHVHPDDLGKVIGRGGRTATALRTLVAGIGGRGIRVDVVDTDQ).

It belongs to the KhpA RNA-binding protein family.

Its subcellular location is the cytoplasm. Its function is as follows. A probable RNA-binding protein. This is RNA-binding protein KhpA from Mycobacterium bovis (strain ATCC BAA-935 / AF2122/97).